The sequence spans 575 residues: Lysine--tRNA ligase (575 aa).

Mg(2+)-binding residues include glutamate 412 and glutamate 419.

The protein belongs to the class-II aminoacyl-tRNA synthetase family. As to quaternary structure, homodimer. Requires Mg(2+) as cofactor.

Its subcellular location is the cytoplasm. The enzyme catalyses tRNA(Lys) + L-lysine + ATP = L-lysyl-tRNA(Lys) + AMP + diphosphate. In Bacteroides fragilis (strain YCH46), this protein is Lysine--tRNA ligase.